Here is a 200-residue protein sequence, read N- to C-terminus: Dephospho-CoA kinase (200 aa).

Residues 3–200 form the DPCK domain; it reads RIGLTGGIGS…LIAEILTRIK (198 aa). 11-16 serves as a coordination point for ATP; the sequence is GSGKST.

Belongs to the CoaE family.

The protein localises to the cytoplasm. The catalysed reaction is 3'-dephospho-CoA + ATP = ADP + CoA + H(+). Its pathway is cofactor biosynthesis; coenzyme A biosynthesis; CoA from (R)-pantothenate: step 5/5. In terms of biological role, catalyzes the phosphorylation of the 3'-hydroxyl group of dephosphocoenzyme A to form coenzyme A. This chain is Dephospho-CoA kinase, found in Corynebacterium efficiens (strain DSM 44549 / YS-314 / AJ 12310 / JCM 11189 / NBRC 100395).